We begin with the raw amino-acid sequence, 157 residues long: F-box protein SNE (157 aa).

An F-box domain is found at 24 to 70; sequence PVFSINDHHDVLVEILRRLDGSSLCSAACVCRLWSAVARNDSIWEEL.

Part of a SCF (ASK-cullin-F-box) protein ligase complex. Interacts directly with SKP1A and SKP1B. In terms of tissue distribution, highly expressed in flowers and at much lower level in seedlings, rosette leaves and green siliques.

It localises to the nucleus. Its pathway is protein modification; protein ubiquitination. Functionally, essential component of a SCF-type E3 ligase complex that positively regulates the gibberellin signaling pathway. Upon gibberellin treatment, such complex probably mediates the ubiquitination and subsequent degradation of DELLA proteins (GAI, RGA and RGL2), some repressors of the gibberellin pathway, leading to activate the pathway. Can partially complement the absence of GID2/SLY1. The chain is F-box protein SNE (SNE) from Arabidopsis thaliana (Mouse-ear cress).